The chain runs to 354 residues: Guanine nucleotide-binding protein G(o) subunit alpha (354 aa).

G2 is lipidated: N-myristoyl glycine. C3 carries the S-palmitoyl cysteine lipid modification. The G-alpha domain occupies 32–354 (KDIKLLLLGA…ANNLRGCGLY (323 aa)). The interval 35 to 48 (KLLLLGAGESGKST) is G1 motif. GTP contacts are provided by residues 40–47 (GAGESGKS), 176–182 (LRTRVKT), 201–205 (DVGGQ), 270–273 (NKKD), and A326. Residues S47 and T182 each coordinate Mg(2+). Positions 174–182 (DILRTRVKT) are G2 motif. Positions 197–206 (FKLFDVGGQR) are G3 motif. A G4 motif region spans residues 266-273 (ILFLNKKD). The tract at residues 324 to 329 (TCATDT) is G5 motif.

This sequence belongs to the G-alpha family. G(i/o/t/z) subfamily. G proteins are composed of 3 units; alpha, beta and gamma. The alpha chain contains the guanine nucleotide binding site. Interacts (in GDP-bound form) with gpr-1; gpr-1 forms a complex with gpr-2 and lin-5. Interacts (in GDP-bound form) with gpb-1. Interacts (in GDP-bound form) with gbas-1 (via GBA motif); the interaction leads to activation of goa-1. As to expression, expressed in the ASER neuron and the intestine.

In terms of biological role, guanine nucleotide-binding proteins (G proteins) are involved as modulators or transducers in various transmembrane signaling systems. In the 1-cell embryo, probably together with gpa-16, controls nuclear rotation and spindle elongation during mitosis. During the first embryonic cell divisions, plays a role in gpr-1/2 cortical localization and in the proper orientation of EMS blastomere mitotic spindle. Polarity determinants (par genes) may regulate lin-5/gpr-1/gpr-2/goa-1 locally to create the asymmetric forces that drive spindle movement. Involved in chemosensory responses to attractive and repellent odors detected by AWC and AWB sensory neurons, respectively. In ASER neurons, acts downstream of glr-3 to regulate cold avoidance behavior via calcium signaling, and it may also play a role in sensing cold in the intestine. Negatively regulates axon regeneration after injury downstream of the inhibitory compound arachidonoyl ethanolamide (AEA) by antagonizing the activation of the JNK pathway (mlk-1/mek-1/kgb-1). In neurons, may negatively regulate diacylglycerol (DAG) production mediated by egl-30 signaling cascade and thereby negatively regulates acetylcholine release. Couples to the muscarinic acetylcholine receptor gar-2 to negatively regulate cholinergic receptor activity in the presence of high levels of acetylcholine in ventral cord motor neurons. Plays a role in the navigational capacity of sperm and the targeting of sperm derived from males to the fertilization site in the uterus of hermaphrodites. Involved in egg-laying and in regulating dopamine-mediated locomotion. Most likely couples to the dopamine receptors dop-2 and dop-3 to positively regulate the dopamine-mediated suppression of crh-1/CREB1 transcription factor activation in cholinergic SIA neurons in the presence of food. This Caenorhabditis elegans protein is Guanine nucleotide-binding protein G(o) subunit alpha.